We begin with the raw amino-acid sequence, 1136 residues long: Solute carrier family 12 member 2 (1136 aa).

Disordered stretches follow at residues 1–73 (MSAS…SVSG) and 91–121 (PDAA…QQHH). Residues 1 to 208 (MSASPPISAG…SESKGVVKFG (208 aa)) lie on the Cytoplasmic side of the membrane. Thr125, Thr129, Thr134, Thr139, and Thr152 each carry phosphothreonine. Residues 209–234 (WIKGVLVRCMLNIWGVMLFIRMTWIV) form a discontinuously helical membrane-spanning segment. A Na(+)-binding site is contributed by Leu219. 2 residues coordinate K(+): Asn220 and Ile221. Trp222 serves as a coordination point for Na(+). Residues Gly223, Val224, and Met225 each contribute to the chloride site. The Extracellular segment spans residues 235–238 (GQAG). A helical membrane pass occupies residues 239-261 (IAYSCIIVIMATVVTTITGCSTS). Residues 262–285 (AIATNGFVRGGGAYYLISRSLGPE) are Cytoplasmic-facing. Residues 286–314 (FGGSIGLIFAFANAVAVAMYVVGFAETVV) form a helical membrane-spanning segment. Phe294 contacts chloride. Tyr305 serves as a coordination point for K(+). The Extracellular segment spans residues 315–327 (ELLMDSGLLMIDQ). 2 consecutive transmembrane segments (helical) span residues 328-351 (TNDI…AGME) and 352-376 (WEAK…IGSF). The Extracellular portion of the chain corresponds to 377 to 407 (IAVDSKKKFGFFSYDAGILAENFGPDFRGQT). Residues 408–427 (FFSVFSIFFPAATGILAGAN) form a discontinuously helical membrane-spanning segment. K(+) is bound by residues Pro417, Ala418, and Thr420. Chloride contacts are provided by Pro417 and Ala418. Residues Gly421 and Ile422 each coordinate chloride. Residues 428 to 438 (ISGDLADPQMA) lie on the Cytoplasmic side of the membrane. Residues 439 to 462 (IPKGTLLAILITGLVYVGVAISAG) form a helical membrane-spanning segment. Residues 463–523 (ACIVRDATGI…DFQVMSVVSG (61 aa)) are Extracellular-facing. 2 N-linked (GlcNAc...) asparagine glycosylation sites follow: Asn475 and Asn481. An intrachain disulfide couples Cys496 to Cys507. A helical membrane pass occupies residues 524 to 551 (FSPLISAGIFSATLSSALASLVSAPKVF). Na(+) is bound by residues Ala535, Ser538, and Ser539. Residues 552–576 (QALCKDNIYPGIAIFGKGYGKNNEP) are Cytoplasmic-facing. Transmembrane regions (helical) follow at residues 577 to 595 (LRGY…LIAE) and 596 to 619 (LNVI…FSVF). Phe607 and Tyr611 together coordinate chloride. The Cytoplasmic segment spans residues 620–636 (HASLANSPGWRPSFKYY). Helical transmembrane passes span 637–656 (NMWA…FIIN) and 657–672 (WWAA…SLYI). Residues 673-1136 (YVSYKKPDVN…NHQSVLTFYS (464 aa)) are Cytoplasmic-facing. The scissor helix stretch occupies residues 689–702 (ALTYHQALTHSLQL). Residues 875–921 (SKDSDGDSSKPSSKATSVQNSPAVQKDEDDDGKAHTQPLLKKDKKSP) are disordered. Residue Thr1059 is modified to Phosphothreonine.

The protein belongs to the SLC12A transporter family. Homodimer; adopts a domain-swap conformation at the scissor helices connecting the transmembrane domain and C-terminal domain. In terms of processing, phosphorylated at Thr-125, Thr-129 and Thr-134 by OXSR1/OSR1 and STK39/SPAK downstream of WNK kinases (WNK1, WNK2, WNK3 or WNK4), promoting its activity.

It localises to the basolateral cell membrane. It carries out the reaction K(+)(out) + 2 chloride(out) + Na(+)(out) = K(+)(in) + 2 chloride(in) + Na(+)(in). Activated following phosphorylation by OXSR1/OSR1 and STK39/SPAK. Inhibited by bumetanide. Functionally, cation-chloride cotransporter which mediates the electroneutral transport of chloride, potassium and/or sodium ions across the membrane. Plays a vital role in the regulation of ionic balance and cell volume. Important for maintenance of endolymph volume in the otic vesicle, probably by regulating ion homeostasis. Also plays a role in normal development of the swim bladder. The protein is Solute carrier family 12 member 2 of Danio rerio (Zebrafish).